Here is a 368-residue protein sequence, read N- to C-terminus: tRNA-specific 2-thiouridylase MnmA (368 aa).

Residues 11–18 and methionine 37 each bind ATP; that span reads GMSGGVDS. The tract at residues 97-99 is interaction with target base in tRNA; it reads NPD. The active-site Nucleophile is cysteine 102. Cysteine 102 and cysteine 199 are oxidised to a cystine. Glycine 127 contributes to the ATP binding site. Residues 149-151 form an interaction with tRNA region; sequence KDQ. Catalysis depends on cysteine 199, which acts as the Cysteine persulfide intermediate. Positions 311–312 are interaction with tRNA; it reads RY.

This sequence belongs to the MnmA/TRMU family. Interacts with TusE.

It localises to the cytoplasm. The catalysed reaction is S-sulfanyl-L-cysteinyl-[protein] + uridine(34) in tRNA + AH2 + ATP = 2-thiouridine(34) in tRNA + L-cysteinyl-[protein] + A + AMP + diphosphate + H(+). In terms of biological role, catalyzes the 2-thiolation of uridine at the wobble position (U34) of tRNA(Lys), tRNA(Glu) and tRNA(Gln), leading to the formation of s(2)U34, the first step of tRNA-mnm(5)s(2)U34 synthesis. Sulfur is provided by IscS, via a sulfur-relay system. Binds ATP and its substrate tRNAs. This chain is tRNA-specific 2-thiouridylase MnmA, found in Klebsiella pneumoniae subsp. pneumoniae (strain ATCC 700721 / MGH 78578).